The sequence spans 240 residues: MPTLGVNIDHVATVRQARRTVEPDPIAAAVLAELAGAEGITAHLREDRRHIQDRDVRLLRQTVRTRLNLEMAATDEMVAIALDIRPDYVTLVPERREEVTTEGGLNVVGQRDRLALVVDQLQSAGIPVSLFIDAEPDQIAASAAIQAQWIELHTGRYAEAETEAAQAQELAALRQGCEQAIAAGLRVNAGHGLTYWNVYPVAQLPGMEELNIGHTIISRAVLVGLERAVREMKLAMQGKL.

Asparagine 7 is a 3-amino-2-oxopropyl phosphate binding site. 9–10 (DH) is a 1-deoxy-D-xylulose 5-phosphate binding site. Position 18 (arginine 18) interacts with 3-amino-2-oxopropyl phosphate. Histidine 43 (proton acceptor) is an active-site residue. Residues arginine 45 and histidine 50 each contribute to the 1-deoxy-D-xylulose 5-phosphate site. Glutamate 70 (proton acceptor) is an active-site residue. Threonine 100 is a binding site for 1-deoxy-D-xylulose 5-phosphate. Histidine 191 (proton donor) is an active-site residue. Residues glycine 192 and 213-214 (GH) each bind 3-amino-2-oxopropyl phosphate.

This sequence belongs to the PNP synthase family. In terms of assembly, homooctamer; tetramer of dimers.

The protein resides in the cytoplasm. It catalyses the reaction 3-amino-2-oxopropyl phosphate + 1-deoxy-D-xylulose 5-phosphate = pyridoxine 5'-phosphate + phosphate + 2 H2O + H(+). It participates in cofactor biosynthesis; pyridoxine 5'-phosphate biosynthesis; pyridoxine 5'-phosphate from D-erythrose 4-phosphate: step 5/5. In terms of biological role, catalyzes the complicated ring closure reaction between the two acyclic compounds 1-deoxy-D-xylulose-5-phosphate (DXP) and 3-amino-2-oxopropyl phosphate (1-amino-acetone-3-phosphate or AAP) to form pyridoxine 5'-phosphate (PNP) and inorganic phosphate. The chain is Pyridoxine 5'-phosphate synthase from Synechococcus elongatus (strain ATCC 33912 / PCC 7942 / FACHB-805) (Anacystis nidulans R2).